Consider the following 514-residue polypeptide: Glutathione-binding protein GsiB (514 aa).

An N-terminal signal peptide occupies residues 1 to 26; sequence MARAVHRSGLVALGIATALMASCAFA.

Belongs to the bacterial solute-binding protein 5 family. As to quaternary structure, the complex is composed of two ATP-binding proteins (GsiA), two transmembrane proteins (GsiC and GsiD) and a solute-binding protein (GsiB).

The protein localises to the periplasm. Part of the ABC transporter complex GsiABCD involved in glutathione import. Binds glutathione. This Shigella flexneri serotype 5b (strain 8401) protein is Glutathione-binding protein GsiB.